Consider the following 78-residue polypeptide: Chassatide C4 (78 aa).

An N-terminal signal peptide occupies residues 1-23 (MAKFATQLFLLTASVVMLEVQSS). The propeptide at 24–42 (IVIMQDPDLGRKLIMNPAN) is removed in mature form. Residues 43-71 (GASCGETCFTGICFTAGCSCNPWPTCTRN) constitute a cross-link (cyclopeptide (Gly-Asn)). 3 disulfides stabilise this stretch: cysteine 46–cysteine 60, cysteine 50–cysteine 62, and cysteine 55–cysteine 68. A propeptide spans 72–78 (GLNPESI) (removed in mature form).

In terms of processing, this is a cyclic peptide.

Its function is as follows. Probably participates in a plant defense mechanism. The chain is Chassatide C4 from Chassalia chartacea (Chassalia curviflora).